The following is a 485-amino-acid chain: UDP-N-acetylmuramate--L-alanine ligase (485 aa).

An ATP-binding site is contributed by G129–T135.

The protein belongs to the MurCDEF family.

The protein localises to the cytoplasm. The catalysed reaction is UDP-N-acetyl-alpha-D-muramate + L-alanine + ATP = UDP-N-acetyl-alpha-D-muramoyl-L-alanine + ADP + phosphate + H(+). The protein operates within cell wall biogenesis; peptidoglycan biosynthesis. Its function is as follows. Cell wall formation. This Vibrio campbellii (strain ATCC BAA-1116) protein is UDP-N-acetylmuramate--L-alanine ligase.